Reading from the N-terminus, the 117-residue chain is Large ribosomal subunit protein uL18 (117 aa).

This sequence belongs to the universal ribosomal protein uL18 family. In terms of assembly, part of the 50S ribosomal subunit; part of the 5S rRNA/L5/L18/L25 subcomplex. Contacts the 5S and 23S rRNAs.

Functionally, this is one of the proteins that bind and probably mediate the attachment of the 5S RNA into the large ribosomal subunit, where it forms part of the central protuberance. The protein is Large ribosomal subunit protein uL18 of Francisella tularensis subsp. novicida (strain U112).